The chain runs to 361 residues: Protein YIM1-2 (361 aa).

This sequence belongs to the YIM1 family.

It is found in the lipid droplet. Its subcellular location is the mitochondrion. In Lachancea thermotolerans (strain ATCC 56472 / CBS 6340 / NRRL Y-8284) (Yeast), this protein is Protein YIM1-2 (YIM1-2).